The following is a 242-amino-acid chain: Ribonuclease 3 (242 aa).

The 128-residue stretch at 12–139 folds into the RNase III domain; the sequence is ANELLEALGT…LIGATFLEHG (128 aa). Glutamate 51 contacts Mg(2+). Residue aspartate 55 is part of the active site. Residues aspartate 125 and glutamate 128 each coordinate Mg(2+). Glutamate 128 is an active-site residue. In terms of domain architecture, DRBM spans 165–236; that stretch reads LDWKTSLTVK…AEAGWKSLDS (72 aa).

It belongs to the ribonuclease III family. As to quaternary structure, homodimer. Requires Mg(2+) as cofactor.

It localises to the cytoplasm. The enzyme catalyses Endonucleolytic cleavage to 5'-phosphomonoester.. In terms of biological role, digests double-stranded RNA. Involved in the processing of primary rRNA transcript to yield the immediate precursors to the large and small rRNAs (23S and 16S). Processes some mRNAs, and tRNAs when they are encoded in the rRNA operon. Processes pre-crRNA and tracrRNA of type II CRISPR loci if present in the organism. This Bifidobacterium longum (strain NCC 2705) protein is Ribonuclease 3.